The primary structure comprises 310 residues: HPr kinase/phosphorylase 1 (310 aa).

Active-site residues include His-139 and Lys-160. Residue 154 to 161 (GQSGVGKS) participates in ATP binding. Mg(2+) is bound at residue Ser-161. Asp-178 acts as the Proton acceptor; for phosphorylation activity. Proton donor; for dephosphorylation activity in catalysis. The interval 202–211 (LEIRGLGIIN) is important for the catalytic mechanism of both phosphorylation and dephosphorylation. Glu-203 contacts Mg(2+). Residue Arg-244 is part of the active site. Residues 265 to 270 (PVRPGR) are important for the catalytic mechanism of dephosphorylation.

This sequence belongs to the HPrK/P family. As to quaternary structure, homohexamer. The cofactor is Mg(2+).

It carries out the reaction [HPr protein]-L-serine + ATP = [HPr protein]-O-phospho-L-serine + ADP + H(+). The enzyme catalyses [HPr protein]-O-phospho-L-serine + phosphate + H(+) = [HPr protein]-L-serine + diphosphate. Catalyzes the ATP- as well as the pyrophosphate-dependent phosphorylation of a specific serine residue in HPr, a phosphocarrier protein of the phosphoenolpyruvate-dependent sugar phosphotransferase system (PTS). HprK/P also catalyzes the pyrophosphate-producing, inorganic phosphate-dependent dephosphorylation (phosphorolysis) of seryl-phosphorylated HPr (P-Ser-HPr). The two antagonistic activities of HprK/P are regulated by several intracellular metabolites, which change their concentration in response to the absence or presence of rapidly metabolisable carbon sources (glucose, fructose, etc.) in the growth medium. Also phosphorylates/dephosphorylates the HPr-like catabolite repression protein crh on a specific serine residue. Therefore, by controlling the phosphorylation state of HPr and crh, HPrK/P is a sensor enzyme that plays a major role in the regulation of carbon metabolism and sugar transport: it mediates carbon catabolite repression (CCR), and regulates PTS-catalyzed carbohydrate uptake and inducer exclusion. This Oceanobacillus iheyensis (strain DSM 14371 / CIP 107618 / JCM 11309 / KCTC 3954 / HTE831) protein is HPr kinase/phosphorylase 1 (hprK1).